Reading from the N-terminus, the 590-residue chain is MSLLQIYWRALGYLAADKRRVALICGANVALAAIAILEPIMFGRVIDAISEHGSVFSTLAVWAGLGAFNVIAFVLVARGADRFAHARRSEVLCQSFERVITMPLAWHHQRGTSNALHTLLRAVETLFSLWLEFMRQHLSTAVALVLLVPTALSMDVRMSMVLLGLGVLYVGIGRLVMKRTKAGQAAVERHYHKVFAHVTDSVSNVAVLQSYNRLGHEAETLRRYVKNLLDAQNPVLDWWAIANALNRLSSTISMMVVLLIGAYLVTHGQLRVGDVIAFTGFATLLISRLDQMSAFANQISEARAKLEEFYKLEDSAADAAEPDGLRDLTNVTGHVRFEDVGFEFANSGQGVSGVSFEVQAGQTVAIVGPTGAGKTTLINLLQRVFSPSTGRILIDGIDTRTVTRKSLRHSIATVFQDAGLLNRSIEDNIRVGRADASNVEIHAAAVAAAAQDFILAKSGGYDTVVGERGGQLSGGERQRIAIARAVLKDAPILVLDEATSALDVETEDRVKEAIDELRRDRTTFIIAHRLTTVRDADLVVFMDKGRVVEMGGFAELSLRNGRFASLLRAGGLLNDEEVRRLSRSVQGEAA.

An ABC transmembrane type-1 domain is found at Val-21–Glu-301. The next 6 helical transmembrane spans lie at Ala-22–Phe-42, Val-55–Leu-75, Gln-136–Val-156, Met-158–Lys-178, Leu-248–Gly-268, and Val-275–Phe-295. In terms of domain architecture, ABC transporter spans Val-335–Ala-569. Gly-368–Thr-375 serves as a coordination point for ATP.

The protein belongs to the ABC transporter superfamily. Beta-(1--&gt;2)glucan exporter (TC 3.A.1.108.1) family. Homodimer.

It is found in the cell inner membrane. The enzyme catalyses [(1-&gt;2)-beta-D-glucosyl](n)(in) + ATP + H2O = [(1-&gt;2)-beta-D-glucosyl](n)(out) + ADP + phosphate + H(+). Involved in beta-(1--&gt;2)glucan export. Transmembrane domains (TMD) form a pore in the inner membrane and the ATP-binding domain (NBD) is responsible for energy generation. The polypeptide is Beta-(1--&gt;2)glucan export ATP-binding/permease protein NdvA (Mesorhizobium japonicum (strain LMG 29417 / CECT 9101 / MAFF 303099) (Mesorhizobium loti (strain MAFF 303099))).